The primary structure comprises 486 residues: N-succinylglutamate 5-semialdehyde dehydrogenase (486 aa).

Position 221–226 (221–226 (GSSATG)) interacts with NAD(+). Catalysis depends on residues Glu-244 and Cys-278.

This sequence belongs to the aldehyde dehydrogenase family. AstD subfamily.

The enzyme catalyses N-succinyl-L-glutamate 5-semialdehyde + NAD(+) + H2O = N-succinyl-L-glutamate + NADH + 2 H(+). It functions in the pathway amino-acid degradation; L-arginine degradation via AST pathway; L-glutamate and succinate from L-arginine: step 4/5. Functionally, catalyzes the NAD-dependent reduction of succinylglutamate semialdehyde into succinylglutamate. This is N-succinylglutamate 5-semialdehyde dehydrogenase from Chromobacterium violaceum (strain ATCC 12472 / DSM 30191 / JCM 1249 / CCUG 213 / NBRC 12614 / NCIMB 9131 / NCTC 9757 / MK).